The primary structure comprises 309 residues: MANSLYQKHIISIPELSREELELIVETAGNIKKEPQPDLLKNKVIASCFFEASTRTRLSFETAIQRLGGSVIGFDSAGNTSLAQKGETLADSVQIIASYANAYVMRHPREGAARLASEFSNGTPVINAGDGANQHPTQTLLDLYTIYETQGRLDNLNIAFVGDLKYGRTVHSLTQALAKFNGVKFFFIAPEVLAMPDYICEELDELGIEYQLLNSMEEAIPELDILYMTRVQKERFDESEYAHIKSAYILSAADLKPARENLKVLHPLPRIDEINIDVDKTPHAYYFQQAENGVYARQALLALVLNESL.

Carbamoyl phosphate-binding residues include arginine 55 and threonine 56. Lysine 85 contacts L-aspartate. 3 residues coordinate carbamoyl phosphate: arginine 106, histidine 135, and glutamine 138. Residues arginine 168 and arginine 230 each contribute to the L-aspartate site. Positions 268 and 269 each coordinate carbamoyl phosphate.

The protein belongs to the aspartate/ornithine carbamoyltransferase superfamily. ATCase family. As to quaternary structure, heterododecamer (2C3:3R2) of six catalytic PyrB chains organized as two trimers (C3), and six regulatory PyrI chains organized as three dimers (R2).

The enzyme catalyses carbamoyl phosphate + L-aspartate = N-carbamoyl-L-aspartate + phosphate + H(+). The protein operates within pyrimidine metabolism; UMP biosynthesis via de novo pathway; (S)-dihydroorotate from bicarbonate: step 2/3. In terms of biological role, catalyzes the condensation of carbamoyl phosphate and aspartate to form carbamoyl aspartate and inorganic phosphate, the committed step in the de novo pyrimidine nucleotide biosynthesis pathway. The polypeptide is Aspartate carbamoyltransferase catalytic subunit (Aliivibrio salmonicida (strain LFI1238) (Vibrio salmonicida (strain LFI1238))).